A 226-amino-acid polypeptide reads, in one-letter code: Fibrillarin-like rRNA/tRNA 2'-O-methyltransferase (226 aa).

S-adenosyl-L-methionine-binding positions include 85 to 86 (TT), 104 to 105 (EF), 129 to 130 (DA), and 149 to 152 (DVAQ).

This sequence belongs to the methyltransferase superfamily. Fibrillarin family. As to quaternary structure, interacts with nop5. Component of box C/D small ribonucleoprotein (sRNP) particles that contain rpl7ae, FlpA and nop5, plus a guide RNA.

Functionally, involved in pre-rRNA and tRNA processing. Utilizes the methyl donor S-adenosyl-L-methionine to catalyze the site-specific 2'-hydroxyl methylation of ribose moieties in rRNA and tRNA. Site specificity is provided by a guide RNA that base pairs with the substrate. Methylation occurs at a characteristic distance from the sequence involved in base pairing with the guide RNA. This Thermococcus onnurineus (strain NA1) protein is Fibrillarin-like rRNA/tRNA 2'-O-methyltransferase.